A 357-amino-acid polypeptide reads, in one-letter code: Dihydroorotate dehydrogenase (quinone) (357 aa).

Residues 61–65 (AGFDK) and T85 contribute to the FMN site. K65 lines the substrate pocket. 110-114 (NRFGF) contacts substrate. FMN is bound by residues N141 and N172. N172 contacts substrate. Residue S175 is the Nucleophile of the active site. N177 contributes to the substrate binding site. Residues K217 and G245 each coordinate FMN. 246-247 (NT) provides a ligand contact to substrate. Residues G268, G297, and 318 to 319 (YS) contribute to the FMN site.

The protein belongs to the dihydroorotate dehydrogenase family. Type 2 subfamily. In terms of assembly, monomer. It depends on FMN as a cofactor.

The protein resides in the cell membrane. It carries out the reaction (S)-dihydroorotate + a quinone = orotate + a quinol. The protein operates within pyrimidine metabolism; UMP biosynthesis via de novo pathway; orotate from (S)-dihydroorotate (quinone route): step 1/1. Functionally, catalyzes the conversion of dihydroorotate to orotate with quinone as electron acceptor. This Xanthobacter autotrophicus (strain ATCC BAA-1158 / Py2) protein is Dihydroorotate dehydrogenase (quinone).